Here is a 451-residue protein sequence, read N- to C-terminus: Tubulin gamma-2 chain (451 aa).

Serine 131 bears the Phosphoserine; by BRSK1 mark. Residue 142 to 148 (AGGTGSG) coordinates GTP.

The protein belongs to the tubulin family. As to quaternary structure, component of the gamma-tubulin ring complex (gTuRC) consisting of TUBGCP2, TUBGCP3, TUBGCP4, TUBGCP5 and TUBGCP6 and gamma-tubulin TUBG1 or TUBG2. TUBGCP2, TUBGCP3, TUBGCP4, TUBGCP5 and TUBGCP6 assemble in a 5:5:2:1:1 stoichiometry; each is associated with a gamma-tubulin, thereby arranging 14 gamma-tubulins in a helical manner. Gamma-tubulin at the first position is blocked by TUBGCP3 at the last position, allowing 13 protafilaments to grow into a microtubule. Interacts with alpha-beta tubulin heterodimers; the interaction allows microtubules to nucleate from the gTuRC. Post-translationally, phosphorylation at Ser-131 by BRSK1 regulates centrosome duplication, possibly by mediating relocation of gamma-tubulin and its associated proteins from the cytoplasm to the centrosome.

Its subcellular location is the cytoplasm. The protein resides in the cytoskeleton. It localises to the microtubule organizing center. The protein localises to the centrosome. In terms of biological role, tubulin is the major constituent of microtubules, protein filaments consisting of alpha- and beta-tubulin heterodimers. Gamma-tubulin is a key component of the gamma-tubulin ring complex (gTuRC) which mediates microtubule nucleation. The gTuRC regulates the minus-end nucleation of alpha-beta tubulin heterodimers that grow into microtubule protafilaments, a critical step in centrosome duplication and spindle formation. In Bos taurus (Bovine), this protein is Tubulin gamma-2 chain (TUBG2).